The sequence spans 521 residues: U4/U6 small nuclear ribonucleoprotein Prp4 (521 aa).

K26 carries the N6-acetyllysine modification. 7 WD repeats span residues 229-268 (DDRPISYCHFSPNSKMLATACWSGLCKLWSVPDCNLLHTL), 271-318 (HNTN…VADI), 321-360 (HTVRVARVTWHPSGRFLGTTCYDRSWRLWDLEAQEEILHQ), 363-402 (HSMGVYDIAFHQDGSLAGTGGLDAFGRVWDLRTGRCIMFL), 405-444 (HLKEIYGINFSPNGYHIATGSGDNTCKVWDLRQRRCVYTI), 447-487 (HQNL…LKTL), and 490-521 (HEGKVMGLDISSDGQLIATCSYDRTFKLWMAE).

As to quaternary structure, component of the precatalytic spliceosome (spliceosome B complex). Component of the U4/U6-U5 tri-snRNP complex, a building block of the precatalytic spliceosome (spliceosome B complex). The U4/U6-U5 tri-snRNP complex is composed of the U4, U6 and U5 snRNAs and at least PRPF3, PRPF4, PRPF6, PRPF8, PRPF31, SNRNP200, TXNL4A, SNRNP40, SNRPB, SNRPD1, SNRPD2, SNRPD3, SNRPE, SNRPF, SNRPG, DDX23, CD2BP2, PPIH, SNU13, EFTUD2, SART1 and USP39, plus LSM2, LSM3, LSM4, LSM5, LSM6, LSM7 and LSM8. Interacts directly with PRPF18, PPIH and PRPF3. Part of a heteromeric complex containing PPIH, PRPF3 and PRPF4 that is stable in the absence of RNA. Interacts with ERCC6.

It localises to the nucleus. The protein resides in the nucleus speckle. Functionally, plays a role in pre-mRNA splicing as component of the U4/U6-U5 tri-snRNP complex that is involved in spliceosome assembly, and as component of the precatalytic spliceosome (spliceosome B complex). The protein is U4/U6 small nuclear ribonucleoprotein Prp4 (PRPF4) of Bos taurus (Bovine).